The following is a 154-amino-acid chain: Protein-export protein SecB (154 aa).

Belongs to the SecB family. In terms of assembly, homotetramer, a dimer of dimers. One homotetramer interacts with 1 SecA dimer.

It localises to the cytoplasm. In terms of biological role, one of the proteins required for the normal export of preproteins out of the cell cytoplasm. It is a molecular chaperone that binds to a subset of precursor proteins, maintaining them in a translocation-competent state. It also specifically binds to its receptor SecA. The polypeptide is Protein-export protein SecB (Blochmanniella pennsylvanica (strain BPEN)).